Consider the following 403-residue polypeptide: Fasciclin-like arabinogalactan protein 2 (403 aa).

An N-terminal signal peptide occupies residues 1–26 (MAYLRRAATALVLIFQLHLFLSLSNA). FAS1 domains lie at 27-174 (HNIT…SQVL) and 187-326 (SDLI…DKVL). 4 N-linked (GlcNAc...) asparagine glycosylation sites follow: Asn28, Asn130, Asn164, and Asn248. Positions 338–371 (SAPAPKSSKKKPKNAEADADGPSADAPSDDDVEV) are disordered. Ala378 carries the GPI-anchor amidated alanine lipid modification. The propeptide at 379 to 403 (VSAMITRTSNVVTAIVGLCFGVWLM) is removed in mature form.

This sequence belongs to the fasciclin-like AGP family. Expressed mainly in flowers and to a lesser extent in leaves and roots.

It localises to the cell membrane. In terms of biological role, may be a cell surface adhesion protein. The protein is Fasciclin-like arabinogalactan protein 2 (FLA2) of Arabidopsis thaliana (Mouse-ear cress).